The sequence spans 422 residues: L-2-hydroxyglutarate dehydrogenase (422 aa).

The protein belongs to the L2HGDH family. The cofactor is FAD.

Its subcellular location is the cell inner membrane. The catalysed reaction is (S)-2-hydroxyglutarate + a quinone = a quinol + 2-oxoglutarate. It participates in amino-acid degradation. Functionally, catalyzes the dehydrogenation of L-2-hydroxyglutarate (L2HG) to alpha-ketoglutarate and couples to the respiratory chain by feeding electrons from the reaction into the membrane quinone pool. Functions in a L-lysine degradation pathway that proceeds via cadaverine, glutarate and L-2-hydroxyglutarate. This Escherichia coli (strain K12) protein is L-2-hydroxyglutarate dehydrogenase.